The following is a 426-amino-acid chain: 5-methylthioadenosine/S-adenosylhomocysteine deaminase (426 aa).

Residues His-60 and His-62 each contribute to the Zn(2+) site. Residues Glu-89 and His-179 each coordinate substrate. A Zn(2+)-binding site is contributed by His-206. Positions 209 and 294 each coordinate substrate. Zn(2+) is bound at residue Asp-294.

Belongs to the metallo-dependent hydrolases superfamily. MTA/SAH deaminase family. It depends on Zn(2+) as a cofactor.

It carries out the reaction S-adenosyl-L-homocysteine + H2O + H(+) = S-inosyl-L-homocysteine + NH4(+). It catalyses the reaction S-methyl-5'-thioadenosine + H2O + H(+) = S-methyl-5'-thioinosine + NH4(+). In terms of biological role, catalyzes the deamination of 5-methylthioadenosine and S-adenosyl-L-homocysteine into 5-methylthioinosine and S-inosyl-L-homocysteine, respectively. Is also able to deaminate adenosine. The polypeptide is 5-methylthioadenosine/S-adenosylhomocysteine deaminase (Dictyoglomus thermophilum (strain ATCC 35947 / DSM 3960 / H-6-12)).